An 802-amino-acid chain; its full sequence is Aldehyde dehydrogenase family 16 member A1 (802 aa).

The disordered stretch occupies residues 513–554 (SLPSGPETGPSPAPPYGLFVRGRFQSPGTQSSRPIKDSSGKV).

The protein belongs to the aldehyde dehydrogenase family. Interacts with SPG21.

The polypeptide is Aldehyde dehydrogenase family 16 member A1 (Aldh16a1) (Rattus norvegicus (Rat)).